Consider the following 596-residue polypeptide: F-box/WD repeat-containing protein 8 (596 aa).

At methionine 1 the chain carries N-acetylmethionine. Residues 21–95 (QVLRRRRRLE…PDRDAAEPEP (75 aa)) are disordered. Residues 29-43 (LEAGERRPRRPEAGA) are compositionally biased toward basic and acidic residues. Low complexity predominate over residues 44–64 (RGEPASGYLGLAQGLLEGAGR). Over residues 71-91 (GRTDRKDVSSRSRSPPDRDAA) the composition is skewed to basic and acidic residues. Residues serine 82 and serine 84 each carry the phosphoserine modification. Residues 111–157 (PFFDVHLPYELAINIFQYLNRRELGLCAQVSKTWKVIAEDEVLWYRL) form the F-box domain. WD repeat units lie at residues 199 to 248 (AVSE…LESE), 257 to 297 (QPYV…FEHD), 298 to 338 (ARIQ…SEFE), 339 to 381 (VQKL…LHYV), 382 to 427 (YGQP…SKLG), 428 to 473 (NALG…SAHQ), 474 to 511 (LGVS…EVHS), and 512 to 559 (RHPV…AYEF).

In terms of assembly, component of the Cul7-RING(FBXW8) complex consisting of CUL7, RBX1, SKP1 and FBXW8; within the complex interacts with CUL7 and SKP1. Interacts with GLMN isoform 1. Interacts with OBSL1, CUL1, CUL2, CCT6B, PFDN5, CCT2, CCT3, CCT6A, CCT7, VBP1, CCDC8, ARF1, TRIP13, PDCD5 and GORASP1. Interacts with MAP4K1/HPK1 (when autophosphorylated). Associated component of the 3M complex. Interacts with POUF51 (when phosphorylated on 'Ser-347'). Phosphorylation at Ser-84 by mTORC2 promotes FBXW8 stabilization, allowing its translocation to the cytosol in response to insulin. As to expression, expressed in placenta and embryonic brain (at protein level).

The protein localises to the cytoplasm. Its subcellular location is the perinuclear region. It localises to the golgi apparatus. It is found in the cytosol. Its pathway is protein modification; protein ubiquitination. Substrate-recognition component of the Cul7-RING(FBXW8) ubiquitin ligase complex, which mediates the ubiquitination and subsequent proteasomal degradation of target proteins. The Cul7-RING(FBXW8) complex mediates ubiquitination and consequent degradation of GORASP1, acting as a component of the ubiquitin ligase pathway that regulates Golgi morphogenesis and dendrite patterning in brain. Mediates ubiquitination and degradation of IRS1 in a mTOR-dependent manner: the Cul7-RING(FBXW8) complex recognizes and binds IRS1 previously phosphorylated by S6 kinase (RPS6KB1 or RPS6KB2). The Cul7-RING(FBXW8) complex also mediates ubiquitination of MAP4K1/HPK1: recognizes and binds autophosphorylated MAP4K1/HPK1, leading to its degradation, thereby affecting cell proliferation and differentiation. The Cul7-RING(FBXW8) complex also mediates ubiquitination of phosphorylated cyclin-D1 (CCND1). The Cul7-RING(FBXW8) complex is however not a major regulator of CCND1 stability during the G1/S transition. Associated component of the 3M complex, suggesting that it mediates some of 3M complex functions. In Rattus norvegicus (Rat), this protein is F-box/WD repeat-containing protein 8 (Fbxw8).